Here is a 98-residue protein sequence, read N- to C-terminus: NADH-ubiquinone oxidoreductase chain 4L (98 aa).

Helical transmembrane passes span 1–21, 29–49, and 61–81; these read MTPT…GMLT, SLLC…LIAL, and IILL…LVSI.

It belongs to the complex I subunit 4L family. Core subunit of respiratory chain NADH dehydrogenase (Complex I) which is composed of 45 different subunits.

Its subcellular location is the mitochondrion inner membrane. It catalyses the reaction a ubiquinone + NADH + 5 H(+)(in) = a ubiquinol + NAD(+) + 4 H(+)(out). Functionally, core subunit of the mitochondrial membrane respiratory chain NADH dehydrogenase (Complex I) which catalyzes electron transfer from NADH through the respiratory chain, using ubiquinone as an electron acceptor. Part of the enzyme membrane arm which is embedded in the lipid bilayer and involved in proton translocation. This Macaca pagensis (Mentawai macaque) protein is NADH-ubiquinone oxidoreductase chain 4L (MT-ND4L).